A 344-amino-acid polypeptide reads, in one-letter code: tRNA N6-adenosine threonylcarbamoyltransferase (344 aa).

Residues His-119 and His-123 each coordinate Fe cation. Substrate is bound by residues 141-145, Asp-174, Gly-187, Asp-191, and Asn-280; that span reads VVSGG. Residue Asp-310 participates in Fe cation binding.

This sequence belongs to the KAE1 / TsaD family. Requires Fe(2+) as cofactor.

Its subcellular location is the cytoplasm. The enzyme catalyses L-threonylcarbamoyladenylate + adenosine(37) in tRNA = N(6)-L-threonylcarbamoyladenosine(37) in tRNA + AMP + H(+). Required for the formation of a threonylcarbamoyl group on adenosine at position 37 (t(6)A37) in tRNAs that read codons beginning with adenine. Is involved in the transfer of the threonylcarbamoyl moiety of threonylcarbamoyl-AMP (TC-AMP) to the N6 group of A37, together with TsaE and TsaB. TsaD likely plays a direct catalytic role in this reaction. This is tRNA N6-adenosine threonylcarbamoyltransferase from Listeria monocytogenes serotype 4b (strain CLIP80459).